Consider the following 247-residue polypeptide: ATP synthase subunit a 1 (247 aa).

6 consecutive transmembrane segments (helical) span residues 32–52 (YMLLAVVLIAGMMLAAGRALV), 82–102 (FFPLVFSLFMFIFVSNIVGII), 112–132 (IIVTFSLALLVFLTVIIYGFY), 141–161 (LFVPSGIPAVILPLVVVIEII), 181–201 (GHVTLKVFASFVTMLGALGFV), and 206–226 (ALLPLGLTVALTGLELMVAFL).

Belongs to the ATPase A chain family. As to quaternary structure, F-type ATPases have 2 components, CF(1) - the catalytic core - and CF(0) - the membrane proton channel. CF(1) has five subunits: alpha(3), beta(3), gamma(1), delta(1), epsilon(1). CF(0) has four main subunits: a, b, b' and c.

The protein localises to the cell inner membrane. Key component of the proton channel; it plays a direct role in the translocation of protons across the membrane. The sequence is that of ATP synthase subunit a 1 from Bradyrhizobium sp. (strain BTAi1 / ATCC BAA-1182).